A 453-amino-acid chain; its full sequence is uncharacterized protein (453 aa).

The TRAM domain occupies 5-63 (LLKKNQSIELTIEDLTHDGSGVGKIDGYPFFIPNTLPGEKVTAKIIKLNKNYGFARMEN). C76, C82, C85, and C162 together coordinate [4Fe-4S] cluster. S-adenosyl-L-methionine is bound by residues Q285, Y314, E335, and D383. The Nucleophile role is filled by C410.

The protein belongs to the class I-like SAM-binding methyltransferase superfamily. RNA M5U methyltransferase family.

This is an uncharacterized protein from Listeria monocytogenes serovar 1/2a (strain ATCC BAA-679 / EGD-e).